The primary structure comprises 245 residues: Chromosome partition protein MukE (245 aa).

The interval Pro213 to Glu245 is disordered. The span at Asp224–Glu245 shows a compositional bias: acidic residues.

The protein belongs to the MukE family. As to quaternary structure, interacts, and probably forms a ternary complex, with MukF and MukB. The complex formation is stimulated by calcium or magnesium.

The protein localises to the cytoplasm. It localises to the nucleoid. Functionally, involved in chromosome condensation, segregation and cell cycle progression. May participate in facilitating chromosome segregation by condensation DNA from both sides of a centrally located replisome during cell division. Probably acts via its interaction with MukB and MukF. The protein is Chromosome partition protein MukE of Actinobacillus succinogenes (strain ATCC 55618 / DSM 22257 / CCUG 43843 / 130Z).